The primary structure comprises 334 residues: Glucan endo-1,3-beta-glucosidase GII (334 aa).

Positions 1–28 (MARKDVASMFAAALFIGAFAAVPTSVQS) are cleaved as a signal peptide. Residue Glu-122 is the Proton donor of the active site. The Nucleophile role is filled by Glu-259.

It belongs to the glycosyl hydrolase 17 family.

The catalysed reaction is Hydrolysis of (1-&gt;3)-beta-D-glucosidic linkages in (1-&gt;3)-beta-D-glucans.. Its function is as follows. May provide a degree of protection against microbial invasion of germinated barley grain through its ability to degrade fungal cell wall polysaccharides. Hydrolyzes laminarin in vitro. This is Glucan endo-1,3-beta-glucosidase GII from Hordeum vulgare (Barley).